Consider the following 367-residue polypeptide: 2-aminoethylphosphonate--pyruvate transaminase (367 aa).

Lysine 194 is subject to N6-(pyridoxal phosphate)lysine.

This sequence belongs to the class-V pyridoxal-phosphate-dependent aminotransferase family. PhnW subfamily. As to quaternary structure, homodimer. It depends on pyridoxal 5'-phosphate as a cofactor.

It catalyses the reaction (2-aminoethyl)phosphonate + pyruvate = phosphonoacetaldehyde + L-alanine. In terms of biological role, involved in phosphonate degradation. The chain is 2-aminoethylphosphonate--pyruvate transaminase from Salmonella heidelberg (strain SL476).